The sequence spans 251 residues: Coproheme decarboxylase (251 aa).

Residues R133, 147-151 (YPMSK), H174, Q187, and S225 each bind Fe-coproporphyrin III. Residue Y147 is part of the active site.

This sequence belongs to the ChdC family. Type 1 subfamily. It depends on Fe-coproporphyrin III as a cofactor.

The enzyme catalyses Fe-coproporphyrin III + 2 H2O2 + 2 H(+) = heme b + 2 CO2 + 4 H2O. It carries out the reaction Fe-coproporphyrin III + H2O2 + H(+) = harderoheme III + CO2 + 2 H2O. It catalyses the reaction harderoheme III + H2O2 + H(+) = heme b + CO2 + 2 H2O. Its pathway is porphyrin-containing compound metabolism; protoheme biosynthesis. Functionally, involved in coproporphyrin-dependent heme b biosynthesis. Catalyzes the decarboxylation of Fe-coproporphyrin III (coproheme) to heme b (protoheme IX), the last step of the pathway. The reaction occurs in a stepwise manner with a three-propionate intermediate. The chain is Coproheme decarboxylase from Listeria monocytogenes serotype 4a (strain HCC23).